Consider the following 431-residue polypeptide: Aspartokinase (431 aa).

This sequence belongs to the aspartokinase family.

The enzyme catalyses L-aspartate + ATP = 4-phospho-L-aspartate + ADP. It participates in amino-acid biosynthesis; L-lysine biosynthesis via DAP pathway; (S)-tetrahydrodipicolinate from L-aspartate: step 1/4. Its pathway is amino-acid biosynthesis; L-methionine biosynthesis via de novo pathway; L-homoserine from L-aspartate: step 1/3. The protein operates within amino-acid biosynthesis; L-threonine biosynthesis; L-threonine from L-aspartate: step 1/5. This Chlamydia trachomatis serovar D (strain ATCC VR-885 / DSM 19411 / UW-3/Cx) protein is Aspartokinase (lysC).